Consider the following 487-residue polypeptide: Uronate isomerase (487 aa).

The protein belongs to the metallo-dependent hydrolases superfamily. Uronate isomerase family.

It carries out the reaction D-glucuronate = D-fructuronate. It catalyses the reaction aldehydo-D-galacturonate = keto-D-tagaturonate. The protein operates within carbohydrate metabolism; pentose and glucuronate interconversion. This chain is Uronate isomerase, found in Caulobacter vibrioides (strain ATCC 19089 / CIP 103742 / CB 15) (Caulobacter crescentus).